The chain runs to 73 residues: Ocellatin-PT7 (73 aa).

Residues 1–22 (MAFLKKSLFLVLFLGLVSLSIC) form the signal peptide. Positions 23–39 (DEEKRQDEDDDDDDDEE) are excised as a propeptide.

As to expression, expressed by the skin glands.

The protein resides in the secreted. Its function is as follows. Has antibacterial activity against Gram-negative bacteria E.coli ATCC 25922 (MIC=60 uM) and S.choleraesuis ATCC 14028 (MIC=240 uM) and against Gram-positive bacterium S.aureus ATCC 29313 (MIC=240 uM). Shows no hemolytic activity and no cytotoxicity. In Leptodactylus pustulatus (Ceara white-lipped frog), this protein is Ocellatin-PT7.